The sequence spans 186 residues: Chromosome-anchoring protein RacA (186 aa).

The segment at residues 3-23 (TADAANELGVSTKTVQRWVKQ) is a DNA-binding region (H-T-H motif). The stretch at 90 to 170 (ERLEERLQRF…NRREKDTAVR (81 aa)) forms a coiled coil. The segment at 158-186 (ESMNRREKDTAVRREEKKPKSKLKSIFSF) is disordered. The segment covering 160-175 (MNRREKDTAVRREEKK) has biased composition (basic and acidic residues).

This sequence belongs to the RacA family.

The protein localises to the cytoplasm. Functionally, required for the formation of axial filaments and for anchoring the origin regions at the cell poles in sporulating cells, thus ensuring proper chromosome segregation in the prespore. Binds in a dispersed manner throughout the chromosome but preferentially to sites clustered in the origin portion of the chromosome, causing condensation of the chromosome and its remodeling into an elongated, anchored structure. The protein is Chromosome-anchoring protein RacA of Bacillus licheniformis (strain ATCC 14580 / DSM 13 / JCM 2505 / CCUG 7422 / NBRC 12200 / NCIMB 9375 / NCTC 10341 / NRRL NRS-1264 / Gibson 46).